A 67-amino-acid polypeptide reads, in one-letter code: ATP synthase F(0) complex subunit 8 (67 aa).

A helical membrane pass occupies residues 8 to 24; that stretch reads TWFIMIFSMFLTLFILF. N6-acetyllysine; alternate is present on K54. N6-succinyllysine; alternate is present on K54. Residue K57 is modified to N6-acetyllysine.

This sequence belongs to the ATPase protein 8 family. In terms of assembly, component of the ATP synthase complex composed at least of ATP5F1A/subunit alpha, ATP5F1B/subunit beta, ATP5MC1/subunit c (homooctomer), MT-ATP6/subunit a, MT-ATP8/subunit 8, ATP5ME/subunit e, ATP5MF/subunit f, ATP5MG/subunit g, ATP5MK/subunit k, ATP5MJ/subunit j, ATP5F1C/subunit gamma, ATP5F1D/subunit delta, ATP5F1E/subunit epsilon, ATP5PF/subunit F6, ATP5PB/subunit b, ATP5PD/subunit d, ATP5PO/subunit OSCP. ATP synthase complex consists of a soluble F(1) head domain (subunits alpha(3) and beta(3)) - the catalytic core - and a membrane F(0) domain - the membrane proton channel (subunits c, a, 8, e, f, g, k and j). These two domains are linked by a central stalk (subunits gamma, delta, and epsilon) rotating inside the F1 region and a stationary peripheral stalk (subunits F6, b, d, and OSCP). Interacts with PRICKLE3.

It localises to the mitochondrion membrane. Its function is as follows. Subunit 8, of the mitochondrial membrane ATP synthase complex (F(1)F(0) ATP synthase or Complex V) that produces ATP from ADP in the presence of a proton gradient across the membrane which is generated by electron transport complexes of the respiratory chain. ATP synthase complex consist of a soluble F(1) head domain - the catalytic core - and a membrane F(1) domain - the membrane proton channel. These two domains are linked by a central stalk rotating inside the F(1) region and a stationary peripheral stalk. During catalysis, ATP synthesis in the catalytic domain of F(1) is coupled via a rotary mechanism of the central stalk subunits to proton translocation. In vivo, can only synthesize ATP although its ATP hydrolase activity can be activated artificially in vitro. Part of the complex F(0) domain. The protein is ATP synthase F(0) complex subunit 8 of Canis lupus familiaris (Dog).